Here is a 412-residue protein sequence, read N- to C-terminus: Fringe glycosyltransferase (412 aa).

Residues 1-15 (MMSLTVLSPPQRFKR) lie on the Cytoplasmic side of the membrane. A helical; Signal-anchor for type II membrane protein membrane pass occupies residues 16-34 (ILQAMMLAVAVVYMTLLLY). Over 35–412 (QSAYGYPGIQ…FPYFSFCPPR (378 aa)) the chain is Lumenal. Arg164 lines the substrate pocket. 2 cysteine pairs are disulfide-bonded: Cys204–Cys215 and Cys233–Cys297. A substrate-binding site is contributed by Asp237. Asp238 is a binding site for Mn(2+). Asp327 is a catalytic residue. Residue His351 participates in Mn(2+) binding. Cys400 and Cys409 are joined by a disulfide.

This sequence belongs to the glycosyltransferase 31 family. Mn(2+) is required as a cofactor. As to expression, expressed in dorsal cells.

It is found in the golgi apparatus membrane. The enzyme catalyses 3-O-(alpha-L-fucosyl)-L-threonyl-[EGF-like domain protein] + UDP-N-acetyl-alpha-D-glucosamine = 3-O-(N-acetyl-beta-D-glucosaminyl-(1-&gt;3)-alpha-L-fucosyl)-L-threonyl-[EGF-like domain protein] + UDP + H(+). The catalysed reaction is 3-O-(alpha-L-fucosyl)-L-seryl-[EGF-like domain protein] + UDP-N-acetyl-alpha-D-glucosamine = 3-O-(N-acetyl-beta-D-glucosaminyl-(1-&gt;3)-alpha-L-fucosyl)-L-seryl-[EGF-like domain protein] + UDP + H(+). In terms of biological role, glycosyltransferase involved in the elongation of O-linked ligands to activate Notch signaling. Possesses fucose-specific beta-1,3-N-acetylglucosaminyltransferase activity; extends the O-linked fucose on the Notch EGF repeats. Boundary-specific cell-signaling molecule that is responsible for dorsal-ventral cell interactions during wing development. The chain is Fringe glycosyltransferase (fng) from Drosophila melanogaster (Fruit fly).